We begin with the raw amino-acid sequence, 188 residues long: Killer cell lectin-like receptor subfamily G member 1 (188 aa).

Over 1 to 33 (MADSSIYSTLELPEAPQVQDESRWKLKAVLHRP) the chain is Cytoplasmic. The short motif at 5–10 (SIYSTL) is the ITIM motif element. Residues 34-56 (HLSRFAMVALGLLTVILMSLLMY) form a helical; Signal-anchor for type II membrane protein membrane-spanning segment. At 57 to 188 (QRILCCGSKD…LQWICKKVLY (132 aa)) the chain is on the extracellular side. Residues cysteine 75 and cysteine 86 are joined by a disulfide bond. Asparagine 82 and asparagine 97 each carry an N-linked (GlcNAc...) asparagine glycan. A C-type lectin domain is found at 82–184 (NGSHCYYFSM…CEVALQWICK (103 aa)). Intrachain disulfides connect cysteine 103–cysteine 183 and cysteine 162–cysteine 175.

As to quaternary structure, forms a monomer and homodimer; disulfide-linked. Interacts (via ITIM motif) with PTPN11 and INPP5D. Phosphorylated in response to monoclonal antibody G63 binding and antigenic stimulation. As to expression, expressed specifically on natural killer (NK) cells and activated CD8 T-cells. Not detected in spleen, thymus, lymph node, testis, brain or kidney. Not detected on mast cell lines, bone marrow-derived mast cells, or peritoneal mast cells.

Its subcellular location is the cell membrane. Its function is as follows. Plays an inhibitory role on natural killer (NK) cells and T-cell functions upon binding to their non-MHC ligands. May mediate missing self recognition by binding to a highly conserved site on classical cadherins, enabling it to monitor expression of E-cadherin/CDH1, N-cadherin/CDH2 and R-cadherin/CDH4 on target cells. This is Killer cell lectin-like receptor subfamily G member 1 (Klrg1) from Mus musculus (Mouse).